The primary structure comprises 256 residues: Deoxyribose-phosphate aldolase (256 aa).

The active-site Proton donor/acceptor is the D102. The active-site Schiff-base intermediate with acetaldehyde is the K165. Residue K197 is the Proton donor/acceptor of the active site.

Belongs to the DeoC/FbaB aldolase family. DeoC type 2 subfamily.

The protein resides in the cytoplasm. It carries out the reaction 2-deoxy-D-ribose 5-phosphate = D-glyceraldehyde 3-phosphate + acetaldehyde. The protein operates within carbohydrate degradation; 2-deoxy-D-ribose 1-phosphate degradation; D-glyceraldehyde 3-phosphate and acetaldehyde from 2-deoxy-alpha-D-ribose 1-phosphate: step 2/2. In terms of biological role, catalyzes a reversible aldol reaction between acetaldehyde and D-glyceraldehyde 3-phosphate to generate 2-deoxy-D-ribose 5-phosphate. The sequence is that of Deoxyribose-phosphate aldolase from Shewanella sp. (strain W3-18-1).